A 270-amino-acid chain; its full sequence is Tryptophan synthase alpha chain (270 aa).

Residues Glu-49 and Asp-60 each act as proton acceptor in the active site.

Belongs to the TrpA family. Tetramer of two alpha and two beta chains.

The enzyme catalyses (1S,2R)-1-C-(indol-3-yl)glycerol 3-phosphate + L-serine = D-glyceraldehyde 3-phosphate + L-tryptophan + H2O. Its pathway is amino-acid biosynthesis; L-tryptophan biosynthesis; L-tryptophan from chorismate: step 5/5. Functionally, the alpha subunit is responsible for the aldol cleavage of indoleglycerol phosphate to indole and glyceraldehyde 3-phosphate. In Paraburkholderia phytofirmans (strain DSM 17436 / LMG 22146 / PsJN) (Burkholderia phytofirmans), this protein is Tryptophan synthase alpha chain.